Here is a 225-residue protein sequence, read N- to C-terminus: PKHD-type hydroxylase YbiX (225 aa).

The Fe2OG dioxygenase domain occupies 78 to 177 (TLSTPLFNRY…RVASFMWIQS (100 aa)). Positions 96, 98, and 158 each coordinate Fe cation. Residue Arg-168 participates in 2-oxoglutarate binding.

It depends on Fe(2+) as a cofactor. L-ascorbate is required as a cofactor.

This Escherichia coli (strain SMS-3-5 / SECEC) protein is PKHD-type hydroxylase YbiX.